We begin with the raw amino-acid sequence, 223 residues long: Ubiquinone biosynthesis protein COQ4 homolog 2, mitochondrial (223 aa).

A mitochondrion-targeting transit peptide spans 1 to 26 (MFLRRVHPVRLGHAIQRSLTTTKSRN). The segment covering 21-32 (TTKSRNESTTTT) has biased composition (low complexity). The disordered stretch occupies residues 21 to 43 (TTKSRNESTTTTVEAPQAVPSPP). Positions 177, 178, 181, and 193 each coordinate Zn(2+).

It belongs to the COQ4 family. As to quaternary structure, component of a multi-subunit COQ enzyme complex. It depends on Zn(2+) as a cofactor.

The protein resides in the mitochondrion inner membrane. The catalysed reaction is a 4-hydroxy-3-methoxy-5-(all-trans-polyprenyl)benzoate + H(+) = a 2-methoxy-6-(all-trans-polyprenyl)phenol + CO2. Its pathway is cofactor biosynthesis; ubiquinone biosynthesis. Functionally, lyase that catalyzes the C1-decarboxylation of 4-hydroxy-3-methoxy-5-(all-trans-polyprenyl)benzoic acid into 2-methoxy-6-(all-trans-polyprenyl)phenol during ubiquinone biosynthesis. This Culex quinquefasciatus (Southern house mosquito) protein is Ubiquinone biosynthesis protein COQ4 homolog 2, mitochondrial.